A 495-amino-acid chain; its full sequence is UDP-N-acetylmuramoyl-L-alanyl-D-glutamate--2,6-diaminopimelate ligase (495 aa).

Residues L27, S29, and 44–46 (HQA) each bind UDP-N-acetyl-alpha-D-muramoyl-L-alanyl-D-glutamate. 116 to 122 (GTNGKTT) serves as a coordination point for ATP. UDP-N-acetyl-alpha-D-muramoyl-L-alanyl-D-glutamate contacts are provided by residues N157, 158-159 (TT), S185, Q191, and R193. N6-carboxylysine is present on K225. Meso-2,6-diaminopimelate-binding positions include R390, 414–417 (DNPR), G465, and E469. The Meso-diaminopimelate recognition motif signature appears at 414-417 (DNPR).

The protein belongs to the MurCDEF family. MurE subfamily. Requires Mg(2+) as cofactor. In terms of processing, carboxylation is probably crucial for Mg(2+) binding and, consequently, for the gamma-phosphate positioning of ATP.

Its subcellular location is the cytoplasm. It catalyses the reaction UDP-N-acetyl-alpha-D-muramoyl-L-alanyl-D-glutamate + meso-2,6-diaminopimelate + ATP = UDP-N-acetyl-alpha-D-muramoyl-L-alanyl-gamma-D-glutamyl-meso-2,6-diaminopimelate + ADP + phosphate + H(+). The protein operates within cell wall biogenesis; peptidoglycan biosynthesis. Its function is as follows. Catalyzes the addition of meso-diaminopimelic acid to the nucleotide precursor UDP-N-acetylmuramoyl-L-alanyl-D-glutamate (UMAG) in the biosynthesis of bacterial cell-wall peptidoglycan. The chain is UDP-N-acetylmuramoyl-L-alanyl-D-glutamate--2,6-diaminopimelate ligase from Salmonella typhimurium (strain LT2 / SGSC1412 / ATCC 700720).